The sequence spans 353 residues: Survival factor 2 (353 aa).

Belongs to the SVF1 family.

It localises to the cytoplasm. Its subcellular location is the nucleus. The chain is Survival factor 2 (svf2) from Schizosaccharomyces pombe (strain 972 / ATCC 24843) (Fission yeast).